A 664-amino-acid chain; its full sequence is DNA ligase (664 aa).

Residues 32 to 36 (DKEYD) and 80 to 81 (SL) contribute to the NAD(+) site. The N6-AMP-lysine intermediate role is filled by Lys122. NAD(+)-binding residues include Arg144, Glu178, and Lys314. Zn(2+) contacts are provided by Cys407, Cys410, Cys423, and Cys429. Positions 587–664 (IDENPFMDKT…NEEEFSNKIK (78 aa)) constitute a BRCT domain.

This sequence belongs to the NAD-dependent DNA ligase family. LigA subfamily. Mg(2+) serves as cofactor. Mn(2+) is required as a cofactor.

It catalyses the reaction NAD(+) + (deoxyribonucleotide)n-3'-hydroxyl + 5'-phospho-(deoxyribonucleotide)m = (deoxyribonucleotide)n+m + AMP + beta-nicotinamide D-nucleotide.. In terms of biological role, DNA ligase that catalyzes the formation of phosphodiester linkages between 5'-phosphoryl and 3'-hydroxyl groups in double-stranded DNA using NAD as a coenzyme and as the energy source for the reaction. It is essential for DNA replication and repair of damaged DNA. The protein is DNA ligase of Clostridium botulinum (strain Loch Maree / Type A3).